A 485-amino-acid chain; its full sequence is E3 ubiquitin-protein ligase RNF8 (485 aa).

The FHA domain occupies 38 to 92 (VTVGRGFGVTYQLVSKICPLMISRNHCVLKQNPEGQWTIMDNKSLNGVWLNRARL). A required for interaction with PIWIL1 region spans residues 68-72 (QNPEG). S157 carries the post-translational modification Phosphoserine. The interval 181 to 220 (CESGQPVKSQGKGEVASTPSDNLDPKLTALEPSKTTGAPI) is disordered. Residues 403–441 (CIICSEYFIEAVTLNCAHSFCSYCINEWMKRKIECPICR) form an RING-type zinc finger.

Belongs to the RNF8 family. As to quaternary structure, homodimer. Forms a E2-E3 ubiquitin ligase complex composed of the RNF8 homodimer and a E2 heterodimer of UBE2N and UBE2V2. Interacts with class III E2s, including UBE2E1, UBE2E2, and UBE2E3 and with UBE2N. Interacts with RXRA. Interacts (via FHA domain) with ATM-phosphorylated MDC1. Interacts (via FHA domain) with 'Thr-4827' phosphorylated HERC2 (via C-terminus). Interacts with PIWIL1; leading to sequester RNF8 in the cytoplasm. Interacts with WRAP53/TCAB1. (Microbial infection) Interacts (via FHA domain) with phosphorylated human herpesvirus 1 ICP0 protein; leading to RNF8 degradation by the proteasome. Autoubiquitinated through 'Lys-48' and 'Lys-63' of ubiquitin. 'Lys-63' polyubiquitination is mediated by UBE2N. 'Lys-29'-type polyubiquitination is also observed, but it doesn't require its own functional RING-type zinc finger. In terms of tissue distribution, ubiquitous. In fetal tissues, highest expression in brain, thymus and liver. In adult tissues, highest levels in brain and testis, lowest levels in peripheral blood cells.

The protein localises to the nucleus. It is found in the cytoplasm. It localises to the midbody. Its subcellular location is the chromosome. The protein resides in the telomere. The enzyme catalyses S-ubiquitinyl-[E2 ubiquitin-conjugating enzyme]-L-cysteine + [acceptor protein]-L-lysine = [E2 ubiquitin-conjugating enzyme]-L-cysteine + N(6)-ubiquitinyl-[acceptor protein]-L-lysine.. It functions in the pathway protein modification; protein ubiquitination. In terms of biological role, E3 ubiquitin-protein ligase that plays a key role in DNA damage signaling via 2 distinct roles: by mediating the 'Lys-63'-linked ubiquitination of histones H2A and H2AX and promoting the recruitment of DNA repair proteins at double-strand breaks (DSBs) sites, and by catalyzing 'Lys-48'-linked ubiquitination to remove target proteins from DNA damage sites. Following DNA DSBs, it is recruited to the sites of damage by ATM-phosphorylated MDC1 and catalyzes the 'Lys-63'-linked ubiquitination of histones H2A and H2AX, thereby promoting the formation of TP53BP1 and BRCA1 ionizing radiation-induced foci (IRIF). Also controls the recruitment of UIMC1-BRCC3 (RAP80-BRCC36) and PAXIP1/PTIP to DNA damage sites. Promotes the recruitment of NBN to DNA damage sites by catalyzing 'Lys-6'-linked ubiquitination of NBN. Also recruited at DNA interstrand cross-links (ICLs) sites and catalyzes 'Lys-63'-linked ubiquitination of histones H2A and H2AX, leading to recruitment of FAAP20/C1orf86 and Fanconi anemia (FA) complex, followed by interstrand cross-link repair. H2A ubiquitination also mediates the ATM-dependent transcriptional silencing at regions flanking DSBs in cis, a mechanism to avoid collision between transcription and repair intermediates. Promotes the formation of 'Lys-63'-linked polyubiquitin chains via interactions with the specific ubiquitin-conjugating UBE2N/UBC13 and ubiquitinates non-histone substrates such as PCNA. Substrates that are polyubiquitinated at 'Lys-63' are usually not targeted for degradation. Also catalyzes the formation of 'Lys-48'-linked polyubiquitin chains via interaction with the ubiquitin-conjugating UBE2L6/UBCH8, leading to degradation of substrate proteins such as CHEK2, JMJD2A/KDM4A and KU80/XRCC5: it is still unclear how the preference toward 'Lys-48'- versus 'Lys-63'-linked ubiquitination is regulated but it could be due to RNF8 ability to interact with specific E2 specific ligases. For instance, interaction with phosphorylated HERC2 promotes the association between RNF8 and UBE2N/UBC13 and favors the specific formation of 'Lys-63'-linked ubiquitin chains. Promotes non-homologous end joining (NHEJ) by promoting the 'Lys-48'-linked ubiquitination and degradation the of KU80/XRCC5. Following DNA damage, mediates the ubiquitination and degradation of JMJD2A/KDM4A in collaboration with RNF168, leading to unmask H4K20me2 mark and promote the recruitment of TP53BP1 at DNA damage sites. Following DNA damage, mediates the ubiquitination and degradation of POLD4/p12, a subunit of DNA polymerase delta. In the absence of POLD4, DNA polymerase delta complex exhibits higher proofreading activity. In addition to its function in damage signaling, also plays a role in higher-order chromatin structure by mediating extensive chromatin decondensation. Involved in the activation of ATM by promoting histone H2B ubiquitination, which indirectly triggers histone H4 'Lys-16' acetylation (H4K16ac), establishing a chromatin environment that promotes efficient activation of ATM kinase. Required in the testis, where it plays a role in the replacement of histones during spermatogenesis. At uncapped telomeres, promotes the joining of deprotected chromosome ends by inducing H2A ubiquitination and TP53BP1 recruitment, suggesting that it may enhance cancer development by aggravating telomere-induced genome instability in case of telomeric crisis. Promotes the assembly of RAD51 at DNA DSBs in the absence of BRCA1 and TP53BP1 Also involved in class switch recombination in immune system, via its role in regulation of DSBs repair. May be required for proper exit from mitosis after spindle checkpoint activation and may regulate cytokinesis. May play a role in the regulation of RXRA-mediated transcriptional activity. Not involved in RXRA ubiquitination by UBE2E2. The protein is E3 ubiquitin-protein ligase RNF8 of Homo sapiens (Human).